The primary structure comprises 145 residues: D-aminoacyl-tRNA deacylase (145 aa).

The Gly-cisPro motif, important for rejection of L-amino acids motif lies at 137 to 138 (GP).

It belongs to the DTD family. In terms of assembly, homodimer.

It is found in the cytoplasm. The enzyme catalyses glycyl-tRNA(Ala) + H2O = tRNA(Ala) + glycine + H(+). It carries out the reaction a D-aminoacyl-tRNA + H2O = a tRNA + a D-alpha-amino acid + H(+). An aminoacyl-tRNA editing enzyme that deacylates mischarged D-aminoacyl-tRNAs. Also deacylates mischarged glycyl-tRNA(Ala), protecting cells against glycine mischarging by AlaRS. Acts via tRNA-based rather than protein-based catalysis; rejects L-amino acids rather than detecting D-amino acids in the active site. By recycling D-aminoacyl-tRNA to D-amino acids and free tRNA molecules, this enzyme counteracts the toxicity associated with the formation of D-aminoacyl-tRNA entities in vivo and helps enforce protein L-homochirality. In Salmonella agona (strain SL483), this protein is D-aminoacyl-tRNA deacylase.